The chain runs to 414 residues: L-cysteine:1D-myo-inositol 2-amino-2-deoxy-alpha-D-glucopyranoside ligase (414 aa).

Cys43 lines the Zn(2+) pocket. Residues 43–46 (CGIT), Thr58, and 81–83 (NVT) contribute to the L-cysteinyl-5'-AMP site. A 'HIGH' region motif is present at residues 45 to 55 (ITPYDATHLGH). Residues 187–192 (ERGGDP) carry the 'ERGGDP' region motif. Residue Trp227 coordinates L-cysteinyl-5'-AMP. Cys231 contacts Zn(2+). An L-cysteinyl-5'-AMP-binding site is contributed by 249 to 251 (GSD). His256 contributes to the Zn(2+) binding site. Ile283 is an L-cysteinyl-5'-AMP binding site. The 'KMSKS' region signature appears at 289-293 (KMSKS).

This sequence belongs to the class-I aminoacyl-tRNA synthetase family. MshC subfamily. As to quaternary structure, monomer. Zn(2+) is required as a cofactor.

The catalysed reaction is 1D-myo-inositol 2-amino-2-deoxy-alpha-D-glucopyranoside + L-cysteine + ATP = 1D-myo-inositol 2-(L-cysteinylamino)-2-deoxy-alpha-D-glucopyranoside + AMP + diphosphate + H(+). In terms of biological role, catalyzes the ATP-dependent condensation of GlcN-Ins and L-cysteine to form L-Cys-GlcN-Ins. This is L-cysteine:1D-myo-inositol 2-amino-2-deoxy-alpha-D-glucopyranoside ligase from Tsukamurella paurometabola (strain ATCC 8368 / DSM 20162 / CCUG 35730 / CIP 100753 / JCM 10117 / KCTC 9821 / NBRC 16120 / NCIMB 702349 / NCTC 13040) (Corynebacterium paurometabolum).